The sequence spans 515 residues: Bifunctional pantoate ligase/cytidylate kinase (515 aa).

Residues 1 to 279 form a pantoate--beta-alanine ligase region; sequence MKVVETVARL…VGSTRLIDNV (279 aa). 31-38 provides a ligand contact to ATP; the sequence is MGALHEGH. Residue His38 is the Proton donor of the active site. (R)-pantoate is bound at residue Gln62. Gln62 provides a ligand contact to beta-alanine. Residue 149-152 coordinates ATP; the sequence is GQKD. Position 155 (Gln155) interacts with (R)-pantoate. ATP contacts are provided by residues Val178 and 186 to 189; that span reads LSSR. The interval 280–515 is cytidylate kinase; it reads VLGQHHERRP…LYRDKVGGSV (236 aa).

This sequence in the N-terminal section; belongs to the pantothenate synthetase family. It in the C-terminal section; belongs to the cytidylate kinase family. Type 1 subfamily.

The protein resides in the cytoplasm. The catalysed reaction is (R)-pantoate + beta-alanine + ATP = (R)-pantothenate + AMP + diphosphate + H(+). It catalyses the reaction CMP + ATP = CDP + ADP. It carries out the reaction dCMP + ATP = dCDP + ADP. Its pathway is cofactor biosynthesis; (R)-pantothenate biosynthesis; (R)-pantothenate from (R)-pantoate and beta-alanine: step 1/1. Its function is as follows. Catalyzes the condensation of pantoate with beta-alanine in an ATP-dependent reaction via a pantoyl-adenylate intermediate. Functionally, catalyzes the transfer of a phosphate group from ATP to either CMP or dCMP to form CDP or dCDP and ADP, respectively. This is Bifunctional pantoate ligase/cytidylate kinase from Gloeobacter violaceus (strain ATCC 29082 / PCC 7421).